We begin with the raw amino-acid sequence, 78 residues long: Putative membrane protein insertion efficiency factor (78 aa).

The protein belongs to the UPF0161 family.

The protein resides in the cell inner membrane. In terms of biological role, could be involved in insertion of integral membrane proteins into the membrane. This Roseobacter denitrificans (strain ATCC 33942 / OCh 114) (Erythrobacter sp. (strain OCh 114)) protein is Putative membrane protein insertion efficiency factor.